The sequence spans 263 residues: MLTITAIKAFNDNYIWVLQQQPHTQVYVVDPGDASVVIDYLEANQLTLAGILLTHHHNDHTGGVAELQAYSQDRLTVYGPDNEKIEGITHPLNATAQPRLTLDYMSGELQVLDVPGHTAGHIAYVIADALFCGDTLFSGGCGRLFEGTPAQMLNSLQQLAQLPADTRVYCAHEYTFSNLKFALAVNPNNRALQDYNERAIALRRQDKATIPSTIALERAINPFLRASDTEIVDSIKQHFSDLNHANLDELGGFTLLRQWKDNF.

His-55, His-57, Asp-59, His-60, His-117, Asp-134, and His-172 together coordinate Zn(2+).

Belongs to the metallo-beta-lactamase superfamily. Glyoxalase II family. As to quaternary structure, monomer. Zn(2+) serves as cofactor.

It catalyses the reaction an S-(2-hydroxyacyl)glutathione + H2O = a 2-hydroxy carboxylate + glutathione + H(+). It functions in the pathway secondary metabolite metabolism; methylglyoxal degradation; (R)-lactate from methylglyoxal: step 2/2. Thiolesterase that catalyzes the hydrolysis of S-D-lactoyl-glutathione to form glutathione and D-lactic acid. The polypeptide is Hydroxyacylglutathione hydrolase (Shewanella baltica (strain OS223)).